Here is a 273-residue protein sequence, read N- to C-terminus: uncharacterized protein (273 aa).

The region spanning 29 to 131 (TLVCVHGFLS…VVLLCSSGYL (103 aa)) is the AB hydrolase-1 domain. Residues Ser-102 and His-254 contribute to the active site.

It belongs to the DmpD/TodF/XylF esterase family.

This is an uncharacterized protein from Bacillus subtilis (strain 168).